Here is a 296-residue protein sequence, read N- to C-terminus: 4-diphosphocytidyl-2-C-methyl-D-erythritol kinase (296 aa).

The active site involves Lys11. ATP is bound at residue 95 to 105 (PVAAGMAGGSS). Asp137 is a catalytic residue.

The protein belongs to the GHMP kinase family. IspE subfamily.

It catalyses the reaction 4-CDP-2-C-methyl-D-erythritol + ATP = 4-CDP-2-C-methyl-D-erythritol 2-phosphate + ADP + H(+). The protein operates within isoprenoid biosynthesis; isopentenyl diphosphate biosynthesis via DXP pathway; isopentenyl diphosphate from 1-deoxy-D-xylulose 5-phosphate: step 3/6. Catalyzes the phosphorylation of the position 2 hydroxy group of 4-diphosphocytidyl-2C-methyl-D-erythritol. This Clostridioides difficile (strain 630) (Peptoclostridium difficile) protein is 4-diphosphocytidyl-2-C-methyl-D-erythritol kinase.